A 486-amino-acid chain; its full sequence is Elastin-binding protein EbpS (486 aa).

Over residues 1–40 the composition is skewed to basic and acidic residues; the sequence is MSNNFKDDFEKNRQSIDTNSHQDHTEDVEKDQSELEHQDT. Residues 1–314 are disordered; the sequence is MSNNFKDDFE…HHDRDKERKK (314 aa). Residues 2–204 lie on the Extracellular side of the membrane; it reads SNNFKDDFEK…ESKDHHSGKK (203 aa). Residues 14-34 are elastin-binding; sequence QSIDTNSHQDHTEDVEKDQSE. Positions 64 to 85 are enriched in polar residues; sequence TNHNKQVHNESQTSEDNVQNEA. Basic and acidic residues-rich tracts occupy residues 103–117, 126–160, and 180–199; these read EPSH…EEGY, DKSH…KSEA, and SKDK…SKDH. The span at 204-225 shows a compositional bias: low complexity; the sequence is KGAAIGAGTAGVAGAAGAMGVS. The helical transmembrane segment at 205–225 threads the bilayer; it reads GAAIGAGTAGVAGAAGAMGVS. The Cytoplasmic portion of the chain corresponds to 226-319; sequence KAKKHSNDAQ…KERKKGGMAK (94 aa). The span at 233 to 246 shows a compositional bias: polar residues; it reads DAQNKSNSGKVNNS. The segment covering 247–259 has biased composition (basic and acidic residues); sequence TEDKASEDKSKEH. Positions 278 to 297 are enriched in low complexity; it reads GAASNSASAASKPHASNNAS. Residues 300–314 show a composition bias toward basic and acidic residues; the sequence is NDEHDHHDRDKERKK. Residues 320–340 traverse the membrane as a helical segment; that stretch reads VLLPLIAAVLIIGALAIFGGM. Residues 341–486 are Extracellular-facing; sequence ALNNHNNGTK…IRNGQQIVIP (146 aa). A disordered region spans residues 351–440; sequence ENKIANTNKN…QRQGGGQRHT (90 aa). The segment covering 361–398 has biased composition (basic and acidic residues); that stretch reads NADESKDKDTSKDASKDKSKSTDSDKSKDDQDKATKDE. Over residues 403–431 the composition is skewed to low complexity; the sequence is QNNANQANNQAQNNQNQQQANQNQQQQQQ. Residues 437–485 form the LysM domain; sequence QRHTVNGQENLYRIAIQYYGSGSPENVEKIRRANGLSGNNIRNGQQIVI.

It is found in the cell membrane. Promotes binding of soluble elastin peptides and tropoelastin to S.aureus cells although it is not able to promote bacterial adherence to immobilized elastin and, therefore, is not a microbial surface component recognizing adhesive matrix molecule (MSCRAMM). This is Elastin-binding protein EbpS (ebpS) from Staphylococcus aureus (strain MRSA252).